Consider the following 264-residue polypeptide: MVWLPRVPCVAAVILLLTVLSPPVALVRNSRPRFLEYSTSECHFYNGTQRVRFLERYIYNREEYVRFDSDVGEYRAVTELGRPDAEYWNSQPEILEDARATVDTYCRHNYEIFDNFLVPRRVEPTVTVYPTKTQPLEHHNLLVCSVSDFYPGNIEVRWFRNGKEEKTGIVSTGLVRNGDWTFQTLVMLETVPQSGEVYTCQVEHPSLTDPVTVEWKAQSTSAQNKMLSGVGGFVLGLLFLGAGLFIYFRNQKGQSGLQPTGLLS.

Positions 1 to 31 (MVWLPRVPCVAAVILLLTVLSPPVALVRNSR) are cleaved as a signal peptide. Residues 32 to 121 (PRFLEYSTSE…IFDNFLVPRR (90 aa)) are beta-1. Topologically, residues 32-225 (PRFLEYSTSE…KAQSTSAQNK (194 aa)) are extracellular. Cystine bridges form between Cys-42–Cys-106 and Cys-144–Cys-200. Asn-46 is a glycosylation site (N-linked (GlcNAc...) asparagine). The interval 122–215 (VEPTVTVYPT…SLTDPVTVEW (94 aa)) is beta-2. The Ig-like C1-type domain occupies 124-214 (PTVTVYPTKT…PSLTDPVTVE (91 aa)). A connecting peptide region spans residues 216–225 (KAQSTSAQNK). The chain crosses the membrane as a helical span at residues 226–248 (MLSGVGGFVLGLLFLGAGLFIYF). Over 249 to 264 (RNQKGQSGLQPTGLLS) the chain is Cytoplasmic.

It belongs to the MHC class II family. Ubiquitinated in immature dendritic cells leading to down-regulation of MHC class II.

The protein resides in the membrane. The polypeptide is H-2 class II histocompatibility antigen, I-E beta chain (H2-Eb1) (Mus musculus (Mouse)).